The sequence spans 220 residues: Botcinic acid biosynthesis cluster B protein 12 (220 aa).

It participates in polyketide biosynthesis. In terms of biological role, part of the gene cluster B that mediates the biosynthesis of botcinic acid and its botcinin derivatives, acetate-derived polyketides that contribute to virulence when combined with the sesquiterpene botrydial. Botcinic acid and its derivatives have been shown to induce chlorosis and necrosis during host plant infection, but also have antifungal activities. Two polyketide synthases, BOA6 and BOA9, are involved in the biosynthesis of botcinins. BOA6 mediates the formation of the per-methylated tetraketide core by condensation of four units of malonyl-CoA with one unit of acetyl-CoA, which would be methylated in activated methylene groups to yield a bicyclic acid intermediate that could then either be converted to botrylactone derivatives or lose the starter acetate unit through a retro-Claisen type C-C bond cleavage to yield botcinin derivatives. The second polyketide synthase, BOA9, is probably required for the biosynthesis of the tetraketide side chain of botcinins. The methyltransferase (MT) domain within BOA6 is probably responsible for the incorporation of four methyl groups. The trans-enoyl reductase BOA5 might take over the enoyl reductase function of BOA6 that misses an ER domain. The monooxygenases BOA2, BOA3 and BOA4 might be involved in further hydroxylations at C4, C5 and C8, whereas BOA7, close to BOA9, could potentially be involved in the hydroxylation at C4 in the side chain of botcinins. This Botryotinia fuckeliana (strain B05.10) (Noble rot fungus) protein is Botcinic acid biosynthesis cluster B protein 12.